A 359-amino-acid chain; its full sequence is GDSL esterase/lipase At5g03610 (359 aa).

The N-terminal stretch at 1–22 is a signal peptide; that stretch reads MDSLIKLFFCLFIFLCTSLLFG. The Nucleophile role is filled by Ser50. N-linked (GlcNAc...) asparagine glycosylation is found at Asn136, Asn236, and Asn259. Catalysis depends on residues Asp332 and His335.

Belongs to the 'GDSL' lipolytic enzyme family.

It localises to the secreted. This is GDSL esterase/lipase At5g03610 from Arabidopsis thaliana (Mouse-ear cress).